A 578-amino-acid chain; its full sequence is Maltogenic alpha-amylase (578 aa).

The protein belongs to the glycosyl hydrolase 13 family.

It carries out the reaction hydrolysis of (1-&gt;4)-alpha-D-glucosidic linkages in polysaccharides so as to remove successive alpha-maltose residues from the non-reducing ends of the chains.. Converts starch into maltose. In contrary to other maltogenic alpha-amylases BlmA cannot hydrolyze 1,4-alpha-glucosidic linkage next to 1,6-alpha-glucosidic linkages. The polypeptide is Maltogenic alpha-amylase (blmA) (Bacillus licheniformis).